A 330-amino-acid chain; its full sequence is Flotillin-like protein FloA (330 aa).

The next 2 helical transmembrane spans lie at 5–25 (IILPIIIIAAVLIALAILFTF) and 28–48 (VALWISALAAGVKISIFTLIG).

This sequence belongs to the flotillin-like FloA family. As to quaternary structure, homooligomerizes.

It is found in the cell membrane. Its subcellular location is the membrane raft. Its function is as follows. Found in functional membrane microdomains (FMM) that may be equivalent to eukaryotic membrane rafts. FMMs are highly dynamic and increase in number as cells age. Flotillins are thought to be important factors in membrane fluidity. This is Flotillin-like protein FloA from Oceanobacillus iheyensis (strain DSM 14371 / CIP 107618 / JCM 11309 / KCTC 3954 / HTE831).